The chain runs to 703 residues: Polyribonucleotide nucleotidyltransferase (703 aa).

2 residues coordinate Mg(2+): aspartate 486 and aspartate 492. In terms of domain architecture, KH spans 553–614; the sequence is PRITTIWIKP…AACDAAIQMI (62 aa). The S1 motif domain occupies 624–692; the sequence is GKLYMGTVKK…KQGKIKLSRK (69 aa).

It belongs to the polyribonucleotide nucleotidyltransferase family. The cofactor is Mg(2+).

It localises to the cytoplasm. It catalyses the reaction RNA(n+1) + phosphate = RNA(n) + a ribonucleoside 5'-diphosphate. Its function is as follows. Involved in mRNA degradation. Catalyzes the phosphorolysis of single-stranded polyribonucleotides processively in the 3'- to 5'-direction. This Trichlorobacter lovleyi (strain ATCC BAA-1151 / DSM 17278 / SZ) (Geobacter lovleyi) protein is Polyribonucleotide nucleotidyltransferase.